Consider the following 138-residue polypeptide: Basic phospholipase A2 Tbo-G6D49 (138 aa).

A signal peptide spans 1–16 (MRTLWIMAVLLVGVEG). Intrachain disulfides connect Cys-42/Cys-131, Cys-44/Cys-60, Cys-59/Cys-111, Cys-65/Cys-138, Cys-66/Cys-104, Cys-73/Cys-97, and Cys-91/Cys-102. Tyr-43, Gly-45, and Gly-47 together coordinate Ca(2+). The active site involves His-63. Asp-64 provides a ligand contact to Ca(2+). Residue Asp-105 is part of the active site.

Monomer. Ca(2+) serves as cofactor. In terms of tissue distribution, expressed by the venom gland.

It localises to the secreted. It catalyses the reaction a 1,2-diacyl-sn-glycero-3-phosphocholine + H2O = a 1-acyl-sn-glycero-3-phosphocholine + a fatty acid + H(+). Its function is as follows. Snake venom phospholipase A2 (PLA2) that impairs hemostasis. It weakly inhibits ADP-induced platelet aggregation when tested on platelet rich plasma from human and rabbit blood (15-25% of inhibition at 5-10 ug of enzyme), and dose-dependently inhibits blood coagulation, possibly by inhibiting thrombin activation. Exhibits strong hydrolytic activities toward L-dipalmitoyl phosphatidylcholine. PLA2 catalyzes the calcium-dependent hydrolysis of the 2-acyl groups in 3-sn-phosphoglycerides. This Craspedocephalus borneensis (Borneo pit viper) protein is Basic phospholipase A2 Tbo-G6D49.